A 267-amino-acid chain; its full sequence is L-aspartate dehydrogenase (267 aa).

NAD(+)-binding residues include Ala-124 and Asn-190. His-218 is a catalytic residue.

This sequence belongs to the L-aspartate dehydrogenase family.

The enzyme catalyses L-aspartate + NADP(+) + H2O = oxaloacetate + NH4(+) + NADPH + H(+). It carries out the reaction L-aspartate + NAD(+) + H2O = oxaloacetate + NH4(+) + NADH + H(+). It functions in the pathway cofactor biosynthesis; NAD(+) biosynthesis; iminoaspartate from L-aspartate (dehydrogenase route): step 1/1. In terms of biological role, specifically catalyzes the NAD or NADP-dependent dehydrogenation of L-aspartate to iminoaspartate. This is L-aspartate dehydrogenase from Methanococcus maripaludis (strain C5 / ATCC BAA-1333).